The chain runs to 125 residues: Large ribosomal subunit protein bL12 (125 aa).

The protein belongs to the bacterial ribosomal protein bL12 family. In terms of assembly, homodimer. Part of the 50S ribosomal subunit; present in 6 copies per ribosome. Forms part of the ribosomal stalk which helps the ribosome interact with GTP-bound translation factors. Forms a heptameric L10(L12)2(L12)2(L12)2 complex, where L10 forms an elongated spine to which 3 L12 dimers bind in a sequential fashion.

Forms part of the ribosomal stalk which helps the ribosome interact with GTP-bound translation factors. Is thus essential for accurate translation. The protein is Large ribosomal subunit protein bL12 of Agrobacterium fabrum (strain C58 / ATCC 33970) (Agrobacterium tumefaciens (strain C58)).